Here is a 215-residue protein sequence, read N- to C-terminus: Beta-crystallin A3 (215 aa).

Position 1 is an N-acetylmethionine (methionine 1). Positions 1–24 (METQTVQQELESLPTTKMAQTNPM) are disordered. Residues 1-30 (METQTVQQELESLPTTKMAQTNPMPGSVGP) form an N-terminal arm region. At glutamate 2 the chain carries N-acetylalanine. Beta/gamma crystallin 'Greek key' domains lie at 31 to 70 (WKIT…KVEC) and 71 to 117 (GAWV…RPIC). S-glutathionyl cysteine; alternate is present on residues cysteine 82 and cysteine 117. Residues cysteine 82 and cysteine 117 each carry the S-methylcysteine; alternate modification. Residues 118-123 (SANHKE) form a connecting peptide region. Beta/gamma crystallin 'Greek key' domains lie at 124–165 (SKIT…KIQC) and 166–214 (GAWV…RRIQ).

This sequence belongs to the beta/gamma-crystallin family. As to quaternary structure, homo/heterodimer, or complexes of higher-order. The structure of beta-crystallin oligomers seems to be stabilized through interactions between the N-terminal arms. Interacts with CRYBA1. Specific cleavages in the N-terminal arm occur during lens maturation and give rise to several truncated forms. Post-translationally, isoform A1 contains a N-acetylalanine at position 2.

Its function is as follows. Crystallins are the dominant structural components of the vertebrate eye lens. The polypeptide is Beta-crystallin A3 (Bos taurus (Bovine)).